The sequence spans 325 residues: DNA-directed RNA polymerase subunit alpha (325 aa).

The segment at 1–239 (MQQFLRYNIN…DHLKPLIDIN (239 aa)) is alpha N-terminal domain (alpha-NTD). The tract at residues 255–325 (EKNKKLSIPI…ELYDLKLKNN (71 aa)) is alpha C-terminal domain (alpha-CTD).

This sequence belongs to the RNA polymerase alpha chain family. In terms of assembly, homodimer. The RNAP catalytic core consists of 2 alpha, 1 beta, 1 beta' and 1 omega subunit. When a sigma factor is associated with the core the holoenzyme is formed, which can initiate transcription.

The enzyme catalyses RNA(n) + a ribonucleoside 5'-triphosphate = RNA(n+1) + diphosphate. Its function is as follows. DNA-dependent RNA polymerase catalyzes the transcription of DNA into RNA using the four ribonucleoside triphosphates as substrates. The chain is DNA-directed RNA polymerase subunit alpha from Mycoplasmoides gallisepticum (strain R(low / passage 15 / clone 2)) (Mycoplasma gallisepticum).